Here is a 239-residue protein sequence, read N- to C-terminus: Purine nucleoside phosphorylase DeoD-type (239 aa).

H5 is a binding site for a purine D-ribonucleoside. Phosphate is bound by residues G21, R25, R44, and 88–91 (RVGS). Residues 180–182 (EME) and 204–205 (SD) contribute to the a purine D-ribonucleoside site. Residue D205 is the Proton donor of the active site.

The protein belongs to the PNP/UDP phosphorylase family. Homohexamer; trimer of homodimers.

It carries out the reaction a purine D-ribonucleoside + phosphate = a purine nucleobase + alpha-D-ribose 1-phosphate. The enzyme catalyses a purine 2'-deoxy-D-ribonucleoside + phosphate = a purine nucleobase + 2-deoxy-alpha-D-ribose 1-phosphate. In terms of biological role, catalyzes the reversible phosphorolytic breakdown of the N-glycosidic bond in the beta-(deoxy)ribonucleoside molecules, with the formation of the corresponding free purine bases and pentose-1-phosphate. This chain is Purine nucleoside phosphorylase DeoD-type, found in Klebsiella pneumoniae (strain 342).